Consider the following 248-residue polypeptide: MAGLNSLEAVKRKIQALQQQADEAEDRAQGLQRELDGERERREKAEGDVAALNRRIQLVEEELDRAQERLATALQKLEEAEKAADESERGMKVIENRAMKDEEKMEIQEMQLKEAKHIAEEADRKYEEVARKLVILEGELERAEERAEVSELKCGDLEEELKNVTNNLKSLEAASEKYSEKEDKYEEEIKLLSDKLKEAETRAEFAERTVAKLEKTIDDLEEKLAQAKEENVGLHQTLDQTLDELNCI.

An N-acetylalanine modification is found at A2. The stretch at 2-248 (AGLNSLEAVK…DQTLDELNCI (247 aa)) forms a coiled coil. S6 bears the Phosphoserine mark. Residues 16–47 (ALQQQADEAEDRAQGLQRELDGERERREKAEG) are disordered. Positions 33-47 (RELDGERERREKAEG) are enriched in basic and acidic residues. K177 and K215 each carry N6-acetyllysine. T216 carries the post-translational modification Phosphothreonine.

Belongs to the tropomyosin family. Homodimer. Heterodimer of an alpha (TPM1, TPM3 or TPM4) and a beta (TPM2) chain.

Its subcellular location is the cytoplasm. The protein resides in the cytoskeleton. Its function is as follows. Binds to actin filaments in muscle and non-muscle cells. Plays a central role, in association with the troponin complex, in the calcium dependent regulation of vertebrate striated muscle contraction. Smooth muscle contraction is regulated by interaction with caldesmon. In non-muscle cells is implicated in stabilizing cytoskeleton actin filaments. Binds calcium. This is Tropomyosin alpha-4 chain (TPM4) from Equus caballus (Horse).